We begin with the raw amino-acid sequence, 263 residues long: MALVKGVAQSQTRPLAFHGEQWTPRALFTVFGAFRASKDYAKLIEFLTNNFACYVKNKTFNFAGTGHLFHSLYAFVPNVSELVKERKQIRLQIDCVMRLFKNTTNDFKMYVELFAFIDAHGGAECPCLLLQQSKLNAVSFVENLNCKLFDIKPPKFKKEPFDSILSKYSLNYKALCFKKKEKCTVGCVTKRQKKMKRRQLLSDRVIYLHNKNDVLDERTLLHGPSGTSLAPCLHRYATVERQTRAGDEMVSFIRYCELCQMRA.

The protein belongs to the baculoviridae LEF-5 family.

Required for late and very late gene expression. The protein is Late expression factor 5 (LEF-5) of Orgyia pseudotsugata (Douglas-fir tussock moth).